The chain runs to 410 residues: MSDLLDTVRGLAKKTDSKILMVVLDGVGGLPLTVNGDTELATARTPNLDALAQESQLGQLELVGAGITPGSGPGHLSLFGYDPLKYVVGRGALSAVGIGVKLNRGDVAVRGNFATLGAGRLILDRRAGRPSDEKNAEIVAKLRAAIPEIDGVAVEVYTESEHRFVVVFRAPEGQPLGANISDVDPQVTGVEPKTAIANDPSSEVTAGLINTFVARAEVALADEPQVNGVLFRGYSDVPHFPSFEDAYQLKAACIASYPMYKGLASLVGMDVLPVEGHEDALEGKVKALRENWAKYDFFYFHIKKTDSTGEDGDFAEKVHKIELFDELLPQLLELQPDVIAVVGDHSTPSKLKSHSWHPVPLLIRSNYGRRDPAQRYTEEEAARGTLGLRHGPDLMPLLMANALKLNKYGA.

Belongs to the BPG-independent phosphoglycerate mutase family. A-PGAM subfamily.

It carries out the reaction (2R)-2-phosphoglycerate = (2R)-3-phosphoglycerate. The protein operates within carbohydrate degradation; glycolysis; pyruvate from D-glyceraldehyde 3-phosphate: step 3/5. Functionally, catalyzes the interconversion of 2-phosphoglycerate and 3-phosphoglycerate. The sequence is that of Probable 2,3-bisphosphoglycerate-independent phosphoglycerate mutase from Deinococcus radiodurans (strain ATCC 13939 / DSM 20539 / JCM 16871 / CCUG 27074 / LMG 4051 / NBRC 15346 / NCIMB 9279 / VKM B-1422 / R1).